Reading from the N-terminus, the 195-residue chain is Cysteine/O-acetylserine efflux protein (195 aa).

The Periplasmic segment spans residues 1-9 (MTPMLLSAF). A helical transmembrane segment spans residues 10–32 (WTYTLITALTPGPNNILALSAAT). Residues 33 to 46 (AHGFRQSIRVLAGM) lie on the Cytoplasmic side of the membrane. The chain crosses the membrane as a helical span at residues 47 to 67 (SLGFLVVMLLCAGIAFSLAVI). Residues 68-69 (DP) are Periplasmic-facing. Residues 70 to 90 (AIIHLLSWVGAAYILWLAWKI) form a helical membrane-spanning segment. The Cytoplasmic portion of the chain corresponds to 91 to 104 (ATSPAADENARPKP). A helical membrane pass occupies residues 105–125 (VGFWVSFGLQFVNVKIILYGI). Over 126–141 (TALSTFVLPQTQALNW) the chain is Periplasmic. Residues 142–162 (VIGVSILLALIGTFGNVCWAL) traverse the membrane as a helical segment. The Cytoplasmic portion of the chain corresponds to 163–176 (AGHLFQRAFRHYGR). A helical transmembrane segment spans residues 177 to 194 (QLNIILALLLVYCAVRIF). Residue tyrosine 195 is a topological domain, periplasmic.

This sequence belongs to the Rht family.

The protein localises to the cell inner membrane. The enzyme catalyses O-acetyl-L-serine(in) = O-acetyl-L-serine(out). It carries out the reaction L-cysteine(in) = L-cysteine(out). Its function is as follows. Exporter of O-acetylserine (OAS) and cysteine. In Salmonella choleraesuis (strain SC-B67), this protein is Cysteine/O-acetylserine efflux protein (eamB).